The sequence spans 412 residues: Elongation factor 1-gamma 2 (412 aa).

At Ser2 the chain carries N-acetylserine. The GST N-terminal domain maps to 2–77 (SQGTLYINRS…YLANQVADEK (76 aa)). The GST C-terminal domain occupies 86-217 (DVIEKSQILR…AEKALTYTPP (132 aa)). The disordered stretch occupies residues 216-253 (PPKKQKAEKPKAEKSKAEKKKDEAKPADDAAPAKKPKH). A compositionally biased stretch (basic and acidic residues) spans 220-247 (QKAEKPKAEKSKAEKKKDEAKPADDAAP). In terms of domain architecture, EF-1-gamma C-terminal spans 251–412 (PKHPLEALGK…KEIVDGKVLK (162 aa)).

As to quaternary structure, the eukaryotic elongation factor 1 complex (eEF1) is probably a heterohexamer. Two trimeric complexes, each composed of eEF1A (TEF1 or TEF2), eEF1Balpha (EFB1) and eEF1Bgamma (CAM1 or TEF4), are probably dimerized via the eF1Bgamma subunits. The eEF1B subcomplex with the GEF activity is formed of eEF1Balpha and eEF1Bgamma. TEF4 interacts with EFB1.

It localises to the cytoplasm. It functions in the pathway protein biosynthesis; polypeptide chain elongation. Subunit of the eukaryotic elongation factor 1 complex (eEF1). Probably plays a role in anchoring the complex to other cellular components. This chain is Elongation factor 1-gamma 2 (TEF4), found in Saccharomyces cerevisiae (strain ATCC 204508 / S288c) (Baker's yeast).